An 80-amino-acid polypeptide reads, in one-letter code: Exodeoxyribonuclease 7 small subunit (80 aa).

The protein belongs to the XseB family. Heterooligomer composed of large and small subunits.

It is found in the cytoplasm. It catalyses the reaction Exonucleolytic cleavage in either 5'- to 3'- or 3'- to 5'-direction to yield nucleoside 5'-phosphates.. Functionally, bidirectionally degrades single-stranded DNA into large acid-insoluble oligonucleotides, which are then degraded further into small acid-soluble oligonucleotides. The polypeptide is Exodeoxyribonuclease 7 small subunit (Citrobacter koseri (strain ATCC BAA-895 / CDC 4225-83 / SGSC4696)).